The primary structure comprises 447 residues: Clusterin (447 aa).

The N-terminal stretch at 1–22 is a signal peptide; sequence MKTLLLCVGLLLSWERGQVLGD. Positions 77 to 80 match the Nuclear localization signal motif; that stretch reads KKNK. 2 N-linked (GlcNAc...) asparagine glycosylation sites follow: Asn-85 and Asn-102. 5 disulfides stabilise this stretch: Cys-101-Cys-311, Cys-112-Cys-303, Cys-115-Cys-300, Cys-120-Cys-293, and Cys-128-Cys-283. The residue at position 132 (Ser-132) is a Phosphoserine. Asn-144, Asn-289, Asn-326, Asn-352, and Asn-372 each carry an N-linked (GlcNAc...) asparagine glycan. Position 394 is a phosphoserine (Ser-394). Residues 441–445 carry the Nuclear localization signal motif; it reads RKKKR.

It belongs to the clusterin family. In terms of assembly, antiparallel disulfide-linked heterodimer of an alpha chain and a beta chain. Self-associates and forms higher oligomers. Interacts with a broad range of misfolded proteins, including APP, APOC2 and LYZ. Slightly acidic pH promotes interaction with misfolded proteins. Forms high-molecular weight oligomers upon interaction with misfolded proteins. Interacts with APOA1, LRP2, CLUAP1 and PON1. Interacts with the complement membrane attack complex. Interacts (via alpha chain) with XRCC6. Interacts with SYVN1, COMMD1, BTRC, CUL1 and with ubiquitin and SCF (SKP1-CUL1-F-box protein) E3 ubiquitin-protein ligase complexes. Interacts (via alpha chain) with BAX in stressed cells, where BAX undergoes a conformation change leading to association with the mitochondrial membrane. Does not interact with BAX in unstressed cells. Found in a complex with LTF, CLU, EPPIN and SEMG1. Interacts (immaturely glycosylated pre-secreted form) with HSPA5; this interaction promotes CLU stability and facilitates stress-induced CLU retrotranslocation from the secretory pathway to the mitochondria, thereby reducing stress-induced apoptosis by stabilizing mitochondrial membrane integrity. Interacts with BCL2L1; this interaction releases and activates BAX and promotes cell death. Interacts with TGFBR2 and ACVR1. Interacts (secreted form) with STMN3; this interaction may act as an important modulator during neuronal differentiation. Interacts with VLDLR and LRP8. In terms of processing, proteolytically cleaved on its way through the secretory system, probably within the Golgi lumen. Proteolytic cleavage is not necessary for its chaperone activity. All non-secreted forms are not proteolytically cleaved. Chaperone activity of uncleaved forms is dependent on a non-reducing environment. Polyubiquitinated, leading to proteasomal degradation. Under cellular stress, the intracellular level of cleaved form is reduced due to proteasomal degradation. Post-translationally, heavily N-glycosylated. About 30% of the protein mass is comprised of complex N-linked carbohydrate. Endoplasmic reticulum (ER) stress induces changes in glycosylation status and increases level of hypoglycosylated forms. Core carbohydrates are essential for chaperone activity. Non-secreted forms are hypoglycosylated or unglycosylated.

The protein resides in the secreted. Its subcellular location is the nucleus. The protein localises to the cytoplasm. It is found in the mitochondrion membrane. It localises to the cytosol. The protein resides in the microsome. Its subcellular location is the endoplasmic reticulum. The protein localises to the mitochondrion. It is found in the perinuclear region. It localises to the cytoplasmic vesicle. The protein resides in the secretory vesicle. Its subcellular location is the chromaffin granule. Its function is as follows. Functions as extracellular chaperone that prevents aggregation of non native proteins. Prevents stress-induced aggregation of blood plasma proteins. Inhibits formation of amyloid fibrils by APP, APOC2, B2M, CALCA, CSN3, SNCA and aggregation-prone LYZ variants (in vitro). Does not require ATP. Maintains partially unfolded proteins in a state appropriate for subsequent refolding by other chaperones, such as HSPA8/HSC70. Does not refold proteins by itself. Binding to cell surface receptors triggers internalization of the chaperone-client complex and subsequent lysosomal or proteasomal degradation. When secreted, protects cells against apoptosis and against cytolysis by complement: inhibits assembly of the complement membrane attack complex (MAC) by preventing polymerization of C9 pore component of the MAC complex. Intracellular forms interact with ubiquitin and SCF (SKP1-CUL1-F-box protein) E3 ubiquitin-protein ligase complexes and promote the ubiquitination and subsequent proteasomal degradation of target proteins. Promotes proteasomal degradation of COMMD1 and IKBKB. Modulates NF-kappa-B transcriptional activity. Following stress, promotes apoptosis. Inhibits apoptosis when associated with the mitochondrial membrane by interference with BAX-dependent release of cytochrome c into the cytoplasm. Plays a role in the regulation of cell proliferation. An intracellular form suppresses stress-induced apoptosis by stabilizing mitochondrial membrane integrity through interaction with HSPA5. Secreted form does not affect caspase or BAX-mediated intrinsic apoptosis and TNF-induced NF-kappa-B-activity. Secreted form act as an important modulator during neuronal differentiation through interaction with STMN3. Plays a role in the clearance of immune complexes that arise during cell injury. In Oryctolagus cuniculus (Rabbit), this protein is Clusterin (CLU).